Reading from the N-terminus, the 315-residue chain is Atrochrysone carboxyl ACP thioesterase (315 aa).

Zn(2+)-binding residues include His95, His97, Asp99, and His100. Residue Asp99 is the Proton donor/acceptor of the active site.

Belongs to the metallo-beta-lactamase superfamily. It depends on Zn(2+) as a cofactor. In terms of tissue distribution, endocrocin is specifically produced in conidia.

The enzyme catalyses atrochrysone carboxyl-[ACP] + H2O = atrochrysone carboxylate + holo-[ACP] + H(+). Atrochrysone carboxyl ACP thioesterase; part of the gene cluster that mediates the biosynthesis of endocrocin, a simple anthraquinone interesting for many biotechnological applications. The pathway begins with the synthesis of atrochrysone thioester by the polyketide synthase (PKS) encA. The atrochrysone carboxyl ACP thioesterase encB then breaks the thioester bond and releases the atrochrysone carboxylic acid from encA. The atrochrysone carboxylic acid is then converted to endocrocin anthrone which is further oxidized into endocrocin by the anthrone oxygenase encC. The exact function of encD has not been identified yet, but it negatively regulates endocrocin production, likely through the modification of endocrocin itself. This Aspergillus fumigatus (strain ATCC MYA-4609 / CBS 101355 / FGSC A1100 / Af293) (Neosartorya fumigata) protein is Atrochrysone carboxyl ACP thioesterase.